A 259-amino-acid chain; its full sequence is Imidazole glycerol phosphate synthase subunit HisF (259 aa).

Catalysis depends on residues D11 and D130.

Belongs to the HisA/HisF family. As to quaternary structure, heterodimer of HisH and HisF.

Its subcellular location is the cytoplasm. It carries out the reaction 5-[(5-phospho-1-deoxy-D-ribulos-1-ylimino)methylamino]-1-(5-phospho-beta-D-ribosyl)imidazole-4-carboxamide + L-glutamine = D-erythro-1-(imidazol-4-yl)glycerol 3-phosphate + 5-amino-1-(5-phospho-beta-D-ribosyl)imidazole-4-carboxamide + L-glutamate + H(+). It participates in amino-acid biosynthesis; L-histidine biosynthesis; L-histidine from 5-phospho-alpha-D-ribose 1-diphosphate: step 5/9. Functionally, IGPS catalyzes the conversion of PRFAR and glutamine to IGP, AICAR and glutamate. The HisF subunit catalyzes the cyclization activity that produces IGP and AICAR from PRFAR using the ammonia provided by the HisH subunit. The chain is Imidazole glycerol phosphate synthase subunit HisF from Desulfosudis oleivorans (strain DSM 6200 / JCM 39069 / Hxd3) (Desulfococcus oleovorans).